The chain runs to 283 residues: Thymidylate synthase (283 aa).

A dUMP-binding site is contributed by Arg22. Cys160 acts as the Nucleophile in catalysis. DUMP is bound by residues 180-183, Asn191, and 221-223; these read RSCD and HIY. Asp183 contacts (6R)-5,10-methylene-5,6,7,8-tetrahydrofolate. Ala282 provides a ligand contact to (6R)-5,10-methylene-5,6,7,8-tetrahydrofolate.

This sequence belongs to the thymidylate synthase family. Bacterial-type ThyA subfamily. In terms of assembly, homodimer.

It is found in the cytoplasm. The enzyme catalyses dUMP + (6R)-5,10-methylene-5,6,7,8-tetrahydrofolate = 7,8-dihydrofolate + dTMP. The protein operates within pyrimidine metabolism; dTTP biosynthesis. In terms of biological role, catalyzes the reductive methylation of 2'-deoxyuridine-5'-monophosphate (dUMP) to 2'-deoxythymidine-5'-monophosphate (dTMP) while utilizing 5,10-methylenetetrahydrofolate (mTHF) as the methyl donor and reductant in the reaction, yielding dihydrofolate (DHF) as a by-product. This enzymatic reaction provides an intracellular de novo source of dTMP, an essential precursor for DNA biosynthesis. The chain is Thymidylate synthase from Shewanella frigidimarina (strain NCIMB 400).